A 139-amino-acid chain; its full sequence is MTERTLVLIKPDGVKRQLVGEILSRIERKGLTLAALELKNVSDDLARQHYAEHADKPFFGSLLEFITSGPLVAAIVEGPRAVAAFRQIAGGTDPVEKAVPGTIRGDFALITQDNLVHGSDSPESAAREIALWFPGEATA.

Residues Lys-10, Phe-58, Arg-86, Thr-92, Arg-104, and Asn-114 each coordinate ATP. The active-site Pros-phosphohistidine intermediate is the His-117.

This sequence belongs to the NDK family. Homotetramer. Mg(2+) serves as cofactor.

The protein localises to the cytoplasm. It catalyses the reaction a 2'-deoxyribonucleoside 5'-diphosphate + ATP = a 2'-deoxyribonucleoside 5'-triphosphate + ADP. It carries out the reaction a ribonucleoside 5'-diphosphate + ATP = a ribonucleoside 5'-triphosphate + ADP. Its function is as follows. Major role in the synthesis of nucleoside triphosphates other than ATP. The ATP gamma phosphate is transferred to the NDP beta phosphate via a ping-pong mechanism, using a phosphorylated active-site intermediate. In Mycolicibacterium smegmatis (strain ATCC 700084 / mc(2)155) (Mycobacterium smegmatis), this protein is Nucleoside diphosphate kinase.